Reading from the N-terminus, the 725-residue chain is Protein ECM27 (725 aa).

Helical transmembrane passes span 21–41 (VTFIVPSLFHIIIAFVLLGIC), 119–139 (VLGACGIILCIVEGSIFIIMS), 157–177 (LLFSLAAMCVMSYVSLMNQVT), 178–198 (VLNCLLMAFLYAFYLVVKLTF), 397–417 (ISDAIFSIITVPFFIIFKLSC), 439–459 (LPIILLFIQSITAPFLLCSIL), 470–490 (LVYLFPLILAMALILLLTAFI), 526–546 (IQIIFLAIGIINIIIWISLLA), 559–579 (ILGLSKAILGLTIFAWGNSVG), 621–641 (LNSMGGIGFSGLVSMLFIGAF), 668–688 (FIVSCVFIILQIILLLLFFGG), and 704–724 (GISMCGLWALATLINILLELF).

It belongs to the Ca(2+):cation antiporter (CaCA) (TC 2.A.19) family.

The protein resides in the membrane. The polypeptide is Protein ECM27 (ECM27) (Saccharomyces cerevisiae (strain ATCC 204508 / S288c) (Baker's yeast)).